The following is a 593-amino-acid chain: RNA-binding protein 47 (593 aa).

The span at Met1–Ala20 shows a compositional bias: low complexity. The tract at residues Met1–Gly25 is disordered. RRM domains lie at Cys71–Asp149, Cys151–Pro233, and Lys246–Pro318. An Omega-N-methylarginine modification is found at Arg332. Asymmetric dimethylarginine; alternate occurs at positions 394 and 405. Residues Arg394 and Arg405 each carry the omega-N-methylarginine; alternate modification.

It belongs to the RRM RBM47 family. In terms of assembly, homodimer. Interacts with A1CF. Interacts with APOBEC1; form an mRNA editing complex. Interacts with RBPMS.

Its subcellular location is the nucleus. It is found in the cytoplasm. Its function is as follows. Single-stranded RNA-binding protein that functions in a variety of RNA processes, including alternative splicing, RNA stabilization, and RNA editing. Functions as an enzyme-substrate adapter for the cytidine deaminase APOBEC1. With APOBEC1 forms an mRNA editing complex involved into cytidine to uridine editing of a variety of mRNA molecules. Through the binding of their 3'UTR, also stabilizes a variety of mRNAs and regulates the expression of genes such as the interferon alpha/beta receptor and interleukin-10. Also involved in the alternative splicing of several genes including TJP1. Binds the pre-mRNA (U)GCAUG consensus sequences in downstream intronic regions of alternative exons, regulating their exclusion and inclusion into mRNAs. Independently of its RNA-binding activity, could negatively regulate MAVS by promoting its lysosomal degradation. This is RNA-binding protein 47 from Homo sapiens (Human).